We begin with the raw amino-acid sequence, 1306 residues long: Angiotensin-converting enzyme (1306 aa).

The signal sequence occupies residues 1-29 (MGAASGRRGPGLLLPLPLLLLLPPQPALA). Topologically, residues 30-1256 (LDPGLQPGNF…GLDLDAQQAR (1227 aa)) are extracellular. Residues asparagine 38, asparagine 54, asparagine 74, glutamate 103, asparagine 111, isoleucine 121, tyrosine 140, asparagine 146, and asparagine 160 are each glycosylated (N-linked (GlcNAc...) asparagine). 2 consecutive Peptidase M2 domains span residues 40-624 (SADE…LGWP) and 643-1222 (VTDE…LGWP). Cysteine 157 and cysteine 165 are joined by a disulfide. Tyrosine 231 contributes to the chloride binding site. Residues asparagine 318 and asparagine 368 are each glycosylated (N-linked (GlcNAc...) asparagine). Cysteine 359 and cysteine 377 are oxidised to a cystine. Histidine 390 contacts Zn(2+). Glutamate 391 functions as the Proton acceptor 1 in the catalytic mechanism. Residues histidine 394, proline 414, glutamate 418, and arginine 442 each contribute to the Zn(2+) site. N-linked (GlcNAc...) asparagine glycosylation is found at asparagine 445 and asparagine 509. The active-site Proton donor 1 is histidine 520. Arginine 529 serves as a coordination point for chloride. Cysteine 545 and cysteine 557 are oxidised to a cystine. N-linked (GlcNAc...) asparagine glycosylation is found at asparagine 617 and asparagine 677. Asparagine 695 and asparagine 714 each carry an N-linked (GlcNAc...) (complex) asparagine glycan. A disulfide bond links cysteine 757 and cysteine 763. Asparagine 760 carries N-linked (GlcNAc...) asparagine; partial glycosylation. Chloride is bound by residues arginine 791 and tyrosine 829. The N-linked (GlcNAc...) asparagine; partial glycan is linked to asparagine 942. Cysteine 957 and cysteine 975 are joined by a disulfide. Histidine 988 lines the Zn(2+) pocket. Glutamate 989 (proton acceptor 2) is an active-site residue. Zn(2+) is bound by residues histidine 992 and glutamate 1016. Chloride-binding residues include tryptophan 1090 and arginine 1094. Catalysis depends on histidine 1118, which acts as the Proton donor 2. Arginine 1127 provides a ligand contact to chloride. Cysteine 1143 and cysteine 1155 are joined by a disulfide. An N-linked (GlcNAc...) asparagine; partial glycan is attached at asparagine 1191. The segment at 1215 to 1256 (HGEKLGWPQYNWTPNSARSEGPLPDSGRVSFLGLDLDAQQAR) is juxtamembrane stalk. Residues 1257–1277 (VGQWLLLFLGIALLVATLGLS) form a helical membrane-spanning segment. The Cytoplasmic segment spans residues 1278 to 1306 (QRLFSIRHRSLHRHSHGPQFGSEVELRHS). Serine 1299 carries the phosphoserine modification.

It belongs to the peptidase M2 family. In terms of assembly, monomer and homodimer; homodimerizes following binding to an inhibitor. Interacts with calmodulin (CALM1, CALM2 or CALM3); interaction takes place in the cytoplasmic region and regulates phosphorylation and proteolytic cleavage. Zn(2+) serves as cofactor. Requires chloride as cofactor. Post-translationally, produced following proteolytic cleavage by secretase enzymes that cleave the transmembrane form in the juxtamembrane stalk region upstream of the transmembrane region. Cleavage can take place at different sites of the juxtamembrane stalk region. In terms of processing, phosphorylated by CK2 on Ser-1299; which allows membrane retention. Phosphorylated on tyrosine residues on its extracellular part, promoting cleavage by secretase enzymes and formation of the soluble form (Angiotensin-converting enzyme, soluble form). As to expression, ubiquitously expressed, with highest levels in lung, kidney, heart, gastrointestinal system and prostate. Specifically expressed in spermatocytes and adult testis.

The protein localises to the cell membrane. It localises to the cytoplasm. It is found in the secreted. The catalysed reaction is Release of a C-terminal dipeptide, oligopeptide-|-Xaa-Yaa, when Xaa is not Pro, and Yaa is neither Asp nor Glu. Thus, conversion of angiotensin I to angiotensin II, with increase in vasoconstrictor activity, but no action on angiotensin II.. It catalyses the reaction angiotensin I + H2O = L-histidyl-L-leucine + angiotensin II. The enzyme catalyses bradykinin + H2O = L-Phe-L-Arg + bradykinin(1-7). It carries out the reaction substance P + H2O = substance P(1-9) + L-Leu-L-Met-NH2. The catalysed reaction is substance P + H2O = substance P(1-8) + Gly-L-Leu-L-Met-NH2. It catalyses the reaction substance P + H2O = L-Phe-L-Phe-Gly-L-Leu-L-Met-NH2 + substance P(1-6). The enzyme catalyses neurotensin + H2O = neurotensin(1-11) + L-isoleucyl-L-leucine. It carries out the reaction goralatide + H2O = N-acetyl-L-seryl-L-aspartate + L-lysyl-L-proline. The catalysed reaction is Met-enkephalin + H2O = L-phenylalanyl-L-methionine + L-tyrosylglycylglycine. It catalyses the reaction Leu-enkephalin + H2O = L-tyrosylglycylglycine + L-phenylalanyl-L-leucine. The enzyme catalyses Met-enkephalin-Arg-Phe + H2O = L-arginyl-L-phenylalanine + Met-enkephalin. The dipeptidyl carboxypeptidase activity is strongly activated by chloride. The dipeptidyl carboxypeptidase activity is specifically inhibited by lisinopril, captopril and enalaprilat. With respect to regulation, strongly inhibited by lisinopril and captopril. Its function is as follows. Dipeptidyl carboxypeptidase that removes dipeptides from the C-terminus of a variety of circulating hormones, such as angiotensin I, bradykinin or enkephalins, thereby playing a key role in the regulation of blood pressure, electrolyte homeostasis or synaptic plasticity. Composed of two similar catalytic domains, each possessing a functional active site, with different selectivity for substrates. Plays a major role in the angiotensin-renin system that regulates blood pressure and sodium retention by the kidney by converting angiotensin I to angiotensin II, resulting in an increase of the vasoconstrictor activity of angiotensin. Also able to inactivate bradykinin, a potent vasodilator, and therefore enhance the blood pressure response. Acts as a regulator of synaptic transmission by mediating cleavage of neuropeptide hormones, such as substance P, neurotensin or enkephalins. Catalyzes degradation of different enkephalin neuropeptides (Met-enkephalin, Leu-enkephalin, Met-enkephalin-Arg-Phe and possibly Met-enkephalin-Arg-Gly-Leu). Acts as a regulator of synaptic plasticity in the nucleus accumbens of the brain by mediating cleavage of Met-enkephalin-Arg-Phe, a strong ligand of Mu-type opioid receptor OPRM1, into Met-enkephalin. Met-enkephalin-Arg-Phe cleavage by ACE decreases activation of OPRM1, leading to long-term synaptic potentiation of glutamate release. Also acts as a regulator of hematopoietic stem cell differentiation by mediating degradation of hemoregulatory peptide N-acetyl-SDKP (AcSDKP). Acts as a regulator of cannabinoid signaling pathway by mediating degradation of hemopressin, an antagonist peptide of the cannabinoid receptor CNR1. Involved in amyloid-beta metabolism by catalyzing degradation of Amyloid-beta protein 40 and Amyloid-beta protein 42 peptides, thereby preventing plaque formation. Catalyzes cleavage of cholecystokinin (maturation of Cholecystokinin-8 and Cholecystokinin-5) and Gonadoliberin-1 (both maturation and degradation) hormones. Degradation of hemoregulatory peptide N-acetyl-SDKP (AcSDKP) and amyloid-beta proteins is mediated by the N-terminal catalytic domain, while angiotensin I and cholecystokinin cleavage is mediated by the C-terminal catalytic region. Soluble form that is released in blood plasma and other body fluids following proteolytic cleavage in the juxtamembrane stalk region. In terms of biological role, isoform produced by alternative promoter usage that is specifically expressed in spermatocytes and adult testis, and which is required for male fertility. In contrast to somatic isoforms, only contains one catalytic domain. Acts as a dipeptidyl carboxypeptidase that removes dipeptides from the C-terminus of substrates. The identity of substrates that are needed for male fertility is unknown. May also have a glycosidase activity which releases GPI-anchored proteins from the membrane by cleaving the mannose linkage in the GPI moiety. The GPIase activity was reported to be essential for the egg-binding ability of the sperm. This activity is however unclear and has been challenged by other groups, suggesting that it may be indirect. This is Angiotensin-converting enzyme from Homo sapiens (Human).